Reading from the N-terminus, the 390-residue chain is ATP phosphoribosyltransferase regulatory subunit (390 aa).

The protein belongs to the class-II aminoacyl-tRNA synthetase family. HisZ subfamily. As to quaternary structure, heteromultimer composed of HisG and HisZ subunits.

The protein resides in the cytoplasm. The protein operates within amino-acid biosynthesis; L-histidine biosynthesis; L-histidine from 5-phospho-alpha-D-ribose 1-diphosphate: step 1/9. Its function is as follows. Required for the first step of histidine biosynthesis. May allow the feedback regulation of ATP phosphoribosyltransferase activity by histidine. This chain is ATP phosphoribosyltransferase regulatory subunit, found in Bacillus velezensis (strain DSM 23117 / BGSC 10A6 / LMG 26770 / FZB42) (Bacillus amyloliquefaciens subsp. plantarum).